A 216-amino-acid polypeptide reads, in one-letter code: Probable transaldolase (216 aa).

Lysine 83 (schiff-base intermediate with substrate) is an active-site residue.

Belongs to the transaldolase family. Type 3B subfamily.

The protein resides in the cytoplasm. It catalyses the reaction D-sedoheptulose 7-phosphate + D-glyceraldehyde 3-phosphate = D-erythrose 4-phosphate + beta-D-fructose 6-phosphate. It participates in carbohydrate degradation; pentose phosphate pathway; D-glyceraldehyde 3-phosphate and beta-D-fructose 6-phosphate from D-ribose 5-phosphate and D-xylulose 5-phosphate (non-oxidative stage): step 2/3. Its function is as follows. Transaldolase is important for the balance of metabolites in the pentose-phosphate pathway. In Desulforamulus reducens (strain ATCC BAA-1160 / DSM 100696 / MI-1) (Desulfotomaculum reducens), this protein is Probable transaldolase.